A 321-amino-acid polypeptide reads, in one-letter code: Methionyl-tRNA formyltransferase (321 aa).

112–115 (GLLP) lines the (6S)-5,6,7,8-tetrahydrofolate pocket.

Belongs to the Fmt family.

The enzyme catalyses L-methionyl-tRNA(fMet) + (6R)-10-formyltetrahydrofolate = N-formyl-L-methionyl-tRNA(fMet) + (6S)-5,6,7,8-tetrahydrofolate + H(+). Functionally, attaches a formyl group to the free amino group of methionyl-tRNA(fMet). The formyl group appears to play a dual role in the initiator identity of N-formylmethionyl-tRNA by promoting its recognition by IF2 and preventing the misappropriation of this tRNA by the elongation apparatus. This chain is Methionyl-tRNA formyltransferase, found in Chlamydia caviae (strain ATCC VR-813 / DSM 19441 / 03DC25 / GPIC) (Chlamydophila caviae).